A 477-amino-acid polypeptide reads, in one-letter code: Transmembrane and coiled-coil domain protein 3 (477 aa).

Serine 46 carries the post-translational modification Phosphoserine. Positions 112 to 153 form a coiled coil; the sequence is KQVFEKKNQKSAHSIAQLQKKLEQYHRKLREIEQNGASRSSK. 2 disordered regions span residues 168-188 and 249-277; these read KDAH…KSGM and PKYG…GAGG. Residue serine 253 is modified to Phosphoserine. Residues 258-273 are compositionally biased toward polar residues; the sequence is SSGTSGSADSNGNQSF. A coiled-coil region spans residues 282–398; it reads DSQGKLAVIL…KLELHQQEQQ (117 aa). Helical transmembrane passes span 417-437 and 450-470; these read VILA…KFVS and FFAV…LCAI.

This sequence belongs to the TEX28 family. May form homodimers and heterodimers with TMCC2 or TMCC3 via the coiled-coil domains. Interacts with ribosomal proteins RPL4 and RPS6. In terms of tissue distribution, widely expressed, with highest levels in brain, spinal cord and testis.

The protein resides in the endoplasmic reticulum membrane. The sequence is that of Transmembrane and coiled-coil domain protein 3 from Homo sapiens (Human).